We begin with the raw amino-acid sequence, 164 residues long: CASP-like protein 1C2 (164 aa).

Over methionine 1 to valine 8 the chain is Cytoplasmic. Residues phenylalanine 9–isoleucine 29 form a helical membrane-spanning segment. Over arginine 30–lysine 53 the chain is Extracellular. Asparagine 39 carries N-linked (GlcNAc...) asparagine glycosylation. A helical transmembrane segment spans residues tyrosine 54 to serine 74. The Cytoplasmic segment spans residues lysine 75–arginine 80. Residues leucine 81–leucine 101 form a helical membrane-spanning segment. At alanine 102 to glutamine 129 the chain is on the extracellular side. Residues alanine 130–cysteine 150 traverse the membrane as a helical segment. The Cytoplasmic portion of the chain corresponds to serine 151–proline 164.

It belongs to the Casparian strip membrane proteins (CASP) family. As to quaternary structure, homodimer and heterodimers.

The protein localises to the cell membrane. In Ricinus communis (Castor bean), this protein is CASP-like protein 1C2.